A 269-amino-acid polypeptide reads, in one-letter code: Probable aquaporin TIP5-1 (269 aa).

5 helical membrane-spanning segments follow: residues 19–39 (AYFAEFFSTFLFVFIAVGSTI), 54–74 (SLMATAVAQAFGLFAAVFIAA), 84–104 (AVTFAYAIGGHITVPSAIFYW), 139–159 (FGAGILEGVLTFMVVYTVHVA), and 177–197 (ALGALVVGAVTGACVLAAGSL). The NPA 1 signature appears at 82 to 84 (NPA). The NPA 2 signature appears at 203-205 (NPA). A helical transmembrane segment spans residues 223-243 (YWAGPMVGAAVAALVHQALVF).

It belongs to the MIP/aquaporin (TC 1.A.8) family. TIP (TC 1.A.8.10) subfamily. Expressed in leaves and anthers, and at lower levels in roots.

It localises to the vacuole membrane. Functionally, aquaporins facilitate the transport of water and small neutral solutes across cell membranes. May be involved in transport from the vacuolar compartment to the cytoplasm. The protein is Probable aquaporin TIP5-1 (TIP5;1) of Oryza sativa subsp. japonica (Rice).